We begin with the raw amino-acid sequence, 338 residues long: Large ribosomal subunit protein uL10 (338 aa).

Residues 298-338 (TVQQSQSQQPAAEEKKEEKKEEEKKGPSEEEIASGLASLFG) form a disordered region. A compositionally biased stretch (basic and acidic residues) spans 309-325 (AEEKKEEKKEEEKKGPS).

Belongs to the universal ribosomal protein uL10 family. As to quaternary structure, part of the 50S ribosomal subunit. Forms part of the ribosomal stalk which helps the ribosome interact with GTP-bound translation factors. Forms a heptameric L10(L12)2(L12)2(L12)2 complex, where L10 forms an elongated spine to which the L12 dimers bind in a sequential fashion.

Functionally, forms part of the ribosomal stalk, playing a central role in the interaction of the ribosome with GTP-bound translation factors. The chain is Large ribosomal subunit protein uL10 from Saccharolobus solfataricus (strain ATCC 35092 / DSM 1617 / JCM 11322 / P2) (Sulfolobus solfataricus).